We begin with the raw amino-acid sequence, 172 residues long: Large ribosomal subunit protein uL10 (172 aa).

Belongs to the universal ribosomal protein uL10 family. As to quaternary structure, part of the ribosomal stalk of the 50S ribosomal subunit. The N-terminus interacts with L11 and the large rRNA to form the base of the stalk. The C-terminus forms an elongated spine to which L12 dimers bind in a sequential fashion forming a multimeric L10(L12)X complex.

Its function is as follows. Forms part of the ribosomal stalk, playing a central role in the interaction of the ribosome with GTP-bound translation factors. The protein is Large ribosomal subunit protein uL10 of Dinoroseobacter shibae (strain DSM 16493 / NCIMB 14021 / DFL 12).